The chain runs to 545 residues: Sphingomyelin phosphodiesterase 5 (545 aa).

The transit peptide at methionine 1–isoleucine 35 directs the protein to the mitochondrion. At alanine 36 to serine 64 the chain is on the mitochondrial matrix side. The chain crosses the membrane as a helical; Signal-anchor for type II membrane protein span at residues isoleucine 65–tryptophan 85. The Mitochondrial intermembrane segment spans residues alanine 86–asparagine 545. Residue glutamate 258 participates in Mg(2+) binding. The Proton acceptor role is filled by histidine 529.

This sequence belongs to the neutral sphingomyelinase family. Mg(2+) serves as cofactor. It depends on Mn(2+) as a cofactor.

It is found in the mitochondrion inner membrane. Its subcellular location is the endoplasmic reticulum membrane. The catalysed reaction is a sphingomyelin + H2O = phosphocholine + an N-acylsphing-4-enine + H(+). It carries out the reaction N-(hexadecanoyl)-sphing-4-enine-1-phosphocholine + H2O = N-hexadecanoylsphing-4-enine + phosphocholine + H(+). The protein operates within lipid metabolism; sphingolipid metabolism. Its activity is regulated as follows. Activated by the phospholipids cardiolipin, phosphatidylserine, and phosphatidylethanolamine. Strongest activation with cardiolipin. Functionally, catalyzes the hydrolysis of membrane sphingomyelin to form phosphorylcholine and ceramide. The protein is Sphingomyelin phosphodiesterase 5 of Danio rerio (Zebrafish).